The primary structure comprises 444 residues: Guanosine nucleotide diphosphate dissociation inhibitor 2 (444 aa).

This sequence belongs to the Rab GDI family. Expressed in roots and floral buds.

Its function is as follows. Regulates the GDP/GTP exchange reaction of most RAB proteins by inhibiting the dissociation of GDP from them, and the subsequent binding of GTP. The chain is Guanosine nucleotide diphosphate dissociation inhibitor 2 (GDI2) from Arabidopsis thaliana (Mouse-ear cress).